Reading from the N-terminus, the 118-residue chain is MKLRANRVGEQMKKELGDIISRKIKDPRVGFVTVTDVQVSRDLQIATVYISVLGDEEQKENTLKGLAKAKGFIRSEIGQRIRLRKTPEISFEFDESIGYGHRIDTLLHEINKEGKREE.

This sequence belongs to the RbfA family. In terms of assembly, monomer. Binds 30S ribosomal subunits, but not 50S ribosomal subunits or 70S ribosomes.

Its subcellular location is the cytoplasm. Functionally, one of several proteins that assist in the late maturation steps of the functional core of the 30S ribosomal subunit. Associates with free 30S ribosomal subunits (but not with 30S subunits that are part of 70S ribosomes or polysomes). Required for efficient processing of 16S rRNA. May interact with the 5'-terminal helix region of 16S rRNA. This Bacillus anthracis (strain A0248) protein is Ribosome-binding factor A.